We begin with the raw amino-acid sequence, 252 residues long: Indole-3-glycerol phosphate synthase (252 aa).

It belongs to the TrpC family.

It catalyses the reaction 1-(2-carboxyphenylamino)-1-deoxy-D-ribulose 5-phosphate + H(+) = (1S,2R)-1-C-(indol-3-yl)glycerol 3-phosphate + CO2 + H2O. Its pathway is amino-acid biosynthesis; L-tryptophan biosynthesis; L-tryptophan from chorismate: step 4/5. This chain is Indole-3-glycerol phosphate synthase, found in Bacillus licheniformis (strain ATCC 14580 / DSM 13 / JCM 2505 / CCUG 7422 / NBRC 12200 / NCIMB 9375 / NCTC 10341 / NRRL NRS-1264 / Gibson 46).